The primary structure comprises 141 residues: Ribonuclease P protein component (141 aa).

Over residues 114–134 the composition is skewed to basic and acidic residues; sequence RRIKAKGERRGDGKRRTERPE. Positions 114–141 are disordered; the sequence is RRIKAKGERRGDGKRRTERPESGPVNGK.

The protein belongs to the RnpA family. As to quaternary structure, consists of a catalytic RNA component (M1 or rnpB) and a protein subunit.

It carries out the reaction Endonucleolytic cleavage of RNA, removing 5'-extranucleotides from tRNA precursor.. RNaseP catalyzes the removal of the 5'-leader sequence from pre-tRNA to produce the mature 5'-terminus. It can also cleave other RNA substrates such as 4.5S RNA. The protein component plays an auxiliary but essential role in vivo by binding to the 5'-leader sequence and broadening the substrate specificity of the ribozyme. The polypeptide is Ribonuclease P protein component (Brucella anthropi (strain ATCC 49188 / DSM 6882 / CCUG 24695 / JCM 21032 / LMG 3331 / NBRC 15819 / NCTC 12168 / Alc 37) (Ochrobactrum anthropi)).